Consider the following 258-residue polypeptide: C4b-binding protein beta chain (258 aa).

The first 15 residues, 1 to 15 (MLCLVVCCLIWLISA), serve as a signal peptide directing secretion. The 58-residue stretch at 18–75 (GSCSEPPPVNNSVFVGKETEEQILGIYLCIKGYHLVGKKSLVFDPSKEWNSTLPECLL) folds into the Sushi 1; atypical; lacks a Cys domain. N-linked (GlcNAc...) asparagine glycans are attached at residues Asn27, Asn67, Asn89, Asn95, and Asn114. 5 disulfide bridges follow: Cys46-Cys73, Cys78-Cys118, Cys104-Cys131, Cys136-Cys176, and Cys162-Cys188. 2 consecutive Sushi domains span residues 76 to 133 (GHCP…ICRS) and 134 to 190 (RDCE…TCES). A glycan (N-linked (GlcNAc...) asparagine) is linked at Asn218.

In terms of assembly, disulfide-linked complex of alpha and beta chains.

It localises to the secreted. Functionally, controls the classical pathway of complement activation. It binds as a cofactor to C3b/C4b inactivator (C3bINA), which then hydrolyzes the complement fragment C4b. It also accelerates the degradation of the C4bC2a complex (C3 convertase) by dissociating the complement fragment C2a. It also interacts with anticoagulant protein S and with serum amyloid P component. The polypeptide is C4b-binding protein beta chain (C4bpb) (Rattus norvegicus (Rat)).